Consider the following 637-residue polypeptide: Threonine--tRNA ligase (637 aa).

In terms of domain architecture, TGS spans 1 to 65 (MIAIQLPDGS…EADEALSIIT (65 aa)). A catalytic region spans residues 246–537 (DHRKLGRELD…LIEEHAGALP (292 aa)). Positions 337, 388, and 514 each coordinate Zn(2+).

The protein belongs to the class-II aminoacyl-tRNA synthetase family. As to quaternary structure, homodimer. Zn(2+) serves as cofactor.

The protein localises to the cytoplasm. It carries out the reaction tRNA(Thr) + L-threonine + ATP = L-threonyl-tRNA(Thr) + AMP + diphosphate + H(+). In terms of biological role, catalyzes the attachment of threonine to tRNA(Thr) in a two-step reaction: L-threonine is first activated by ATP to form Thr-AMP and then transferred to the acceptor end of tRNA(Thr). Also edits incorrectly charged L-seryl-tRNA(Thr). This chain is Threonine--tRNA ligase, found in Leptothrix cholodnii (strain ATCC 51168 / LMG 8142 / SP-6) (Leptothrix discophora (strain SP-6)).